The following is a 96-amino-acid chain: UPF0235 protein CAB243 (96 aa).

This sequence belongs to the UPF0235 family.

In Chlamydia abortus (strain DSM 27085 / S26/3) (Chlamydophila abortus), this protein is UPF0235 protein CAB243.